Here is a 1045-residue protein sequence, read N- to C-terminus: FERM, ARHGEF and pleckstrin domain-containing protein 1 (1045 aa).

The interval 1–37 (MGEIEQRPTPGSRLGAPENSGISTLERGQKPPPTPSG) is disordered. Phosphoserine occurs at positions 20 and 23. Threonine 24 carries the phosphothreonine modification. Residues 40 to 320 (VSIKIQMLDD…EHHAFFRLFE (281 aa)) form the FERM domain. Serine 340, serine 373, serine 389, serine 403, serine 418, serine 427, and serine 433 each carry phosphoserine. The segment at 361-534 (FERKHSKIHS…TDDEDEGRRK (174 aa)) is disordered. Residues 373–396 (SLASQPTELNSEVLEQSQQSTSLT) are compositionally biased toward polar residues. Polar residues-rich tracts occupy residues 471–489 (TGSLTGSPHLSELSVNSQG) and 496–511 (VTLSPNLSPDTKQASP). A phosphoserine mark is found at serine 510 and serine 514. One can recognise a DH domain in the interval 540-730 (KAYFIAKEVS…TEMVAQLHGT (191 aa)). The region spanning 759-856 (EFIRLGSLSK…WVEDIQMAID (98 aa)) is the PH 1 domain. Phosphoserine is present on residues serine 833, serine 872, and serine 878. The interval 864-903 (PAPEFLASSPPDNKSPDEATAADQESEDDLSASRTSLERQ) is disordered. Threonine 883 carries the post-translational modification Phosphothreonine. Serine 889, serine 896, and serine 899 each carry phosphoserine. One can recognise a PH 2 domain in the interval 932-1029 (ENQLSGNLLR…WMEVIRSATS (98 aa)).

As to quaternary structure, interacts with CADM1. Interacts with RAC1. Detected in cAMP-treated chondrocytes, but not in untreated chondrocytes. Detected in fetal brain, heart and spleen, and in adult testis, kidney and lung.

It is found in the cell membrane. The protein localises to the synapse. Its subcellular location is the synaptosome. It localises to the cytoplasm. The protein resides in the cytosol. It is found in the cell projection. The protein localises to the filopodium. Its subcellular location is the dendrite. It localises to the dendritic spine. Functions as a guanine nucleotide exchange factor for RAC1. May play a role in semaphorin signaling. Plays a role in the assembly and disassembly of dendritic filopodia, the formation of dendritic spines, regulation of dendrite length and ultimately the formation of synapses. In Homo sapiens (Human), this protein is FERM, ARHGEF and pleckstrin domain-containing protein 1 (FARP1).